Consider the following 852-residue polypeptide: Aconitate hydratase B (852 aa).

Residues R194, 237-239 (SSR), 405-407 (QDT), and S489 contribute to the substrate site. [4Fe-4S] cluster is bound by residues C708, C766, and C769. R788 and R793 together coordinate substrate.

This sequence belongs to the aconitase/IPM isomerase family. Monomer. [4Fe-4S] cluster is required as a cofactor.

It catalyses the reaction citrate = D-threo-isocitrate. The catalysed reaction is (2S,3R)-3-hydroxybutane-1,2,3-tricarboxylate = 2-methyl-cis-aconitate + H2O. It participates in carbohydrate metabolism; tricarboxylic acid cycle; isocitrate from oxaloacetate: step 2/2. Its pathway is organic acid metabolism; propanoate degradation. Functionally, involved in the catabolism of short chain fatty acids (SCFA) via the tricarboxylic acid (TCA)(acetyl degradation route) and probably via the 2-methylcitrate cycle I (propionate degradation route). Catalyzes the reversible isomerization of citrate to isocitrate via cis-aconitate. Catalyzes the hydration of 2-methyl-cis-aconitate to yield (2R,3S)-2-methylisocitrate. The apo form of AcnB functions as a RNA-binding regulatory protein. The chain is Aconitate hydratase B (acnB) from Helicobacter pylori (strain J99 / ATCC 700824) (Campylobacter pylori J99).